The following is a 1295-amino-acid chain: Serine protease sat autotransporter (1295 aa).

An N-terminal signal peptide occupies residues 1–49 (MNKIYSLKYSAATGGLIAVSELAKRVSGKTNRKLVATMLSLAVAGTVNA). The region spanning 51–300 (NIDISNVWAR…TKYNDKLVSE (250 aa)) is the Peptidase S6 domain. Active-site charge relay system residues include His121, Asp149, and Ser256. One can recognise an Autotransporter domain in the interval 1029-1295 (DINGESGAWA…AINANFRYSF (267 aa)).

In terms of processing, cleaved to release the mature protein from the outer membrane.

It localises to the periplasm. The protein localises to the secreted. Its subcellular location is the cell surface. The protein resides in the cell outer membrane. Its activity is regulated as follows. Inhibited by phenylmethylsulfonyl fluoride and Pefabloc. Shows serine protease activity and displays cytophatic activity, including elongation, rounding, and detachment of a proportion of the cells from monolayer in culture. Triggers vacuolation within the cytoplasm of the human bladder and kidney cells. The polypeptide is Serine protease sat autotransporter (sat) (Escherichia coli O6:H1 (strain CFT073 / ATCC 700928 / UPEC)).